The sequence spans 125 residues: Oxytocin-neurophysin 1 (125 aa).

Residues 1–19 form the signal peptide; it reads MAGPSLACCLLGLLALTSA. A disulfide bond links Cys-20 and Cys-25. Gly-28 bears the Glycine amide mark. Cystine bridges form between Cys-41/Cys-85, Cys-44/Cys-58, Cys-52/Cys-75, Cys-59/Cys-65, Cys-92/Cys-104, Cys-98/Cys-116, and Cys-105/Cys-110.

It belongs to the vasopressin/oxytocin family. In terms of assembly, interacts with oxytocin receptor (Ki=1.5 nM). Interacts with vasopressin V1aR/AVPR1A (Ki=37 nM), V1bR/AVPR1B (Ki=222 nM), and V2R/AVPR2 receptors (Ki=823 nM).

Its function is as follows. Neurophysin 1 specifically binds oxytocin. Functionally, oxytocin causes contraction of the smooth muscle of the uterus and of the mammary gland. Acts by binding to oxytocin receptor (OXTR). The polypeptide is Oxytocin-neurophysin 1 (OXT) (Sus scrofa (Pig)).